The following is a 329-amino-acid chain: Diaminopimelate epimerase (329 aa).

2 residues coordinate substrate: Asn-14 and Asn-73. Cys-82 (proton donor) is an active-site residue. Residues 83-84, Asn-170, Asn-206, and 224-225 each bind substrate; these read GN and ER. The active-site Proton acceptor is the Cys-233. 234 to 235 is a substrate binding site; that stretch reads GT.

Belongs to the diaminopimelate epimerase family. In terms of assembly, homodimer.

It is found in the cytoplasm. The catalysed reaction is (2S,6S)-2,6-diaminopimelate = meso-2,6-diaminopimelate. It participates in amino-acid biosynthesis; L-lysine biosynthesis via DAP pathway; DL-2,6-diaminopimelate from LL-2,6-diaminopimelate: step 1/1. Catalyzes the stereoinversion of LL-2,6-diaminopimelate (L,L-DAP) to meso-diaminopimelate (meso-DAP), a precursor of L-lysine and an essential component of the bacterial peptidoglycan. This is Diaminopimelate epimerase from Listeria monocytogenes serotype 4b (strain F2365).